Reading from the N-terminus, the 477-residue chain is Putative BTB/POZ domain-containing protein R830 (477 aa).

The BTB domain occupies 13–83 (SDLELILVDK…FYGIETNNDP (71 aa)).

The protein belongs to the mimivirus BTB/WD family.

This Acanthamoeba polyphaga mimivirus (APMV) protein is Putative BTB/POZ domain-containing protein R830.